A 407-amino-acid chain; its full sequence is Imidazolonepropionase (407 aa).

Residues His75 and His77 each coordinate Fe(3+). 2 residues coordinate Zn(2+): His75 and His77. The 4-imidazolone-5-propanoate site is built by Arg84, Tyr142, and His169. Tyr142 provides a ligand contact to N-formimidoyl-L-glutamate. His232 lines the Fe(3+) pocket. His232 contributes to the Zn(2+) binding site. Residue Gln235 participates in 4-imidazolone-5-propanoate binding. Asp306 serves as a coordination point for Fe(3+). Asp306 provides a ligand contact to Zn(2+). The N-formimidoyl-L-glutamate site is built by Asn308 and Gly310. Thr311 provides a ligand contact to 4-imidazolone-5-propanoate.

This sequence belongs to the metallo-dependent hydrolases superfamily. HutI family. Requires Zn(2+) as cofactor. It depends on Fe(3+) as a cofactor.

Its subcellular location is the cytoplasm. The catalysed reaction is 4-imidazolone-5-propanoate + H2O = N-formimidoyl-L-glutamate. The protein operates within amino-acid degradation; L-histidine degradation into L-glutamate; N-formimidoyl-L-glutamate from L-histidine: step 3/3. Its function is as follows. Catalyzes the hydrolytic cleavage of the carbon-nitrogen bond in imidazolone-5-propanoate to yield N-formimidoyl-L-glutamate. It is the third step in the universal histidine degradation pathway. The sequence is that of Imidazolonepropionase from Rhodococcus jostii (strain RHA1).